The chain runs to 103 residues: Large ribosomal subunit protein eL14 (103 aa).

Belongs to the eukaryotic ribosomal protein eL14 family.

The polypeptide is Large ribosomal subunit protein eL14 (Pyrobaculum aerophilum (strain ATCC 51768 / DSM 7523 / JCM 9630 / CIP 104966 / NBRC 100827 / IM2)).